Reading from the N-terminus, the 255-residue chain is Hemin import ATP-binding protein HmuV (255 aa).

The ABC transporter domain maps to L2–D238. G34–S41 contributes to the ATP binding site.

It belongs to the ABC transporter superfamily. Heme (hemin) importer (TC 3.A.1.14.5) family. As to quaternary structure, the complex is composed of two ATP-binding proteins (HmuV), two transmembrane proteins (HmuU) and a solute-binding protein (HmuT).

It is found in the cell inner membrane. Part of the ABC transporter complex HmuTUV involved in hemin import. Responsible for energy coupling to the transport system. The protein is Hemin import ATP-binding protein HmuV of Pseudomonas entomophila (strain L48).